The primary structure comprises 622 residues: 1-deoxy-D-xylulose-5-phosphate synthase (622 aa).

Thiamine diphosphate-binding positions include H74 and 115 to 117 (GHS). D146 contributes to the Mg(2+) binding site. Residues 147–148 (GA), N175, Y286, and E366 each bind thiamine diphosphate. N175 is a binding site for Mg(2+).

Belongs to the transketolase family. DXPS subfamily. In terms of assembly, homodimer. The cofactor is Mg(2+). Thiamine diphosphate serves as cofactor.

The catalysed reaction is D-glyceraldehyde 3-phosphate + pyruvate + H(+) = 1-deoxy-D-xylulose 5-phosphate + CO2. It functions in the pathway metabolic intermediate biosynthesis; 1-deoxy-D-xylulose 5-phosphate biosynthesis; 1-deoxy-D-xylulose 5-phosphate from D-glyceraldehyde 3-phosphate and pyruvate: step 1/1. In terms of biological role, catalyzes the acyloin condensation reaction between C atoms 2 and 3 of pyruvate and glyceraldehyde 3-phosphate to yield 1-deoxy-D-xylulose-5-phosphate (DXP). The protein is 1-deoxy-D-xylulose-5-phosphate synthase of Carboxydothermus hydrogenoformans (strain ATCC BAA-161 / DSM 6008 / Z-2901).